Here is a 124-residue protein sequence, read N- to C-terminus: Ribonuclease pancreatic (124 aa).

The disordered stretch occupies residues arginine 1 to proline 23. Residues lysine 7 and arginine 10 each contribute to the substrate site. The active-site Proton acceptor is the histidine 12. A compositionally biased stretch (polar residues) spans aspartate 14 to proline 23. Cystine bridges form between cysteine 26-cysteine 84, cysteine 40-cysteine 95, cysteine 58-cysteine 110, and cysteine 65-cysteine 72. Residues lysine 41–threonine 45 and lysine 66 contribute to the substrate site. N-linked (GlcNAc...) asparagine; partial glycosylation is present at asparagine 76. Arginine 85 is a substrate binding site. Histidine 119 acts as the Proton donor in catalysis.

The protein belongs to the pancreatic ribonuclease family. As to quaternary structure, monomer. Interacts with and forms tight 1:1 complexes with RNH1. Dimerization of two such complexes may occur. Interaction with RNH1 inhibits this protein. As to expression, pancreas.

It localises to the secreted. The enzyme catalyses an [RNA] containing cytidine + H2O = an [RNA]-3'-cytidine-3'-phosphate + a 5'-hydroxy-ribonucleotide-3'-[RNA].. The catalysed reaction is an [RNA] containing uridine + H2O = an [RNA]-3'-uridine-3'-phosphate + a 5'-hydroxy-ribonucleotide-3'-[RNA].. Endonuclease that catalyzes the cleavage of RNA on the 3' side of pyrimidine nucleotides. Acts on single-stranded and double-stranded RNA. The chain is Ribonuclease pancreatic (RNASE1) from Balaenoptera acutorostrata (Common minke whale).